The chain runs to 127 residues: Protein translocase subunit SecE (127 aa).

Transmembrane regions (helical) follow at residues 17–37 (VKWI…MCFY), 41–61 (LFIR…TMIY), and 95–115 (FIVI…DSVI).

The protein belongs to the SecE/SEC61-gamma family. In terms of assembly, component of the Sec protein translocase complex. Heterotrimer consisting of SecY, SecE and SecG subunits. The heterotrimers can form oligomers, although 1 heterotrimer is thought to be able to translocate proteins. Interacts with the ribosome. Interacts with SecDF, and other proteins may be involved. Interacts with SecA.

The protein localises to the cell inner membrane. Essential subunit of the Sec protein translocation channel SecYEG. Clamps together the 2 halves of SecY. May contact the channel plug during translocation. In Buchnera aphidicola subsp. Acyrthosiphon pisum (strain APS) (Acyrthosiphon pisum symbiotic bacterium), this protein is Protein translocase subunit SecE.